A 330-amino-acid chain; its full sequence is Mitochondrial glycine transporter (330 aa).

Solcar repeat units lie at residues 11-94, 122-206, and 234-318; these read SSSY…LRQN, LSNL…LKKR, and TSAS…LIRR. Transmembrane regions (helical) follow at residues 17-42, 69-95, 128-153, 181-204, 238-264, and 293-311; these read FTAG…TRLQ, GTVP…RQNV, LTTG…VRYE, GFGA…EQLK, INFG…KTRI, and GLGL…AWTI.

Belongs to the mitochondrial carrier (TC 2.A.29) family. SLC25A38 subfamily.

The protein localises to the mitochondrion inner membrane. The catalysed reaction is glycine(in) = glycine(out). Functionally, mitochondrial glycine transporter that imports glycine into the mitochondrial matrix. Plays an important role in providing glycine for the first enzymatic step in heme biosynthesis, the condensation of glycine with succinyl-CoA to produce 5-aminolevulinate (ALA) in the mitochondrial matrix. The polypeptide is Mitochondrial glycine transporter (Sclerotinia sclerotiorum (strain ATCC 18683 / 1980 / Ss-1) (White mold)).